We begin with the raw amino-acid sequence, 138 residues long: UPF0047 protein YjbQ (138 aa).

It belongs to the UPF0047 family.

The protein is UPF0047 protein YjbQ (yjbQ) of Escherichia coli O157:H7.